We begin with the raw amino-acid sequence, 275 residues long: 2,3,4,5-tetrahydropyridine-2,6-dicarboxylate N-succinyltransferase (275 aa).

Belongs to the transferase hexapeptide repeat family.

It localises to the cytoplasm. The catalysed reaction is (S)-2,3,4,5-tetrahydrodipicolinate + succinyl-CoA + H2O = (S)-2-succinylamino-6-oxoheptanedioate + CoA. Its pathway is amino-acid biosynthesis; L-lysine biosynthesis via DAP pathway; LL-2,6-diaminopimelate from (S)-tetrahydrodipicolinate (succinylase route): step 1/3. The sequence is that of 2,3,4,5-tetrahydropyridine-2,6-dicarboxylate N-succinyltransferase from Burkholderia ambifaria (strain MC40-6).